The primary structure comprises 200 residues: NADH-quinone oxidoreductase subunit C (200 aa).

This sequence belongs to the complex I 30 kDa subunit family. In terms of assembly, NDH-1 is composed of 14 different subunits. Subunits NuoB, C, D, E, F, and G constitute the peripheral sector of the complex.

The protein resides in the cell inner membrane. The catalysed reaction is a quinone + NADH + 5 H(+)(in) = a quinol + NAD(+) + 4 H(+)(out). In terms of biological role, NDH-1 shuttles electrons from NADH, via FMN and iron-sulfur (Fe-S) centers, to quinones in the respiratory chain. The immediate electron acceptor for the enzyme in this species is believed to be ubiquinone. Couples the redox reaction to proton translocation (for every two electrons transferred, four hydrogen ions are translocated across the cytoplasmic membrane), and thus conserves the redox energy in a proton gradient. This is NADH-quinone oxidoreductase subunit C from Burkholderia vietnamiensis (strain G4 / LMG 22486) (Burkholderia cepacia (strain R1808)).